The sequence spans 206 residues: Urease accessory protein UreG (206 aa).

Position 11–18 (11–18) interacts with GTP; it reads GPVGAGKT.

The protein belongs to the SIMIBI class G3E GTPase family. UreG subfamily. Homodimer. UreD, UreF and UreG form a complex that acts as a GTP-hydrolysis-dependent molecular chaperone, activating the urease apoprotein by helping to assemble the nickel containing metallocenter of UreC. The UreE protein probably delivers the nickel.

It localises to the cytoplasm. Facilitates the functional incorporation of the urease nickel metallocenter. This process requires GTP hydrolysis, probably effectuated by UreG. This Ureaplasma parvum serovar 3 (strain ATCC 700970) protein is Urease accessory protein UreG.